Consider the following 180-residue polypeptide: Large ribosomal subunit protein uL6 (180 aa).

Belongs to the universal ribosomal protein uL6 family. As to quaternary structure, part of the 50S ribosomal subunit.

Its function is as follows. This protein binds to the 23S rRNA, and is important in its secondary structure. It is located near the subunit interface in the base of the L7/L12 stalk, and near the tRNA binding site of the peptidyltransferase center. This is Large ribosomal subunit protein uL6 from Anaeromyxobacter dehalogenans (strain 2CP-1 / ATCC BAA-258).